We begin with the raw amino-acid sequence, 57 residues long: Zinc finger protein MJ0458.1 (57 aa).

4 consecutive short sequence motifs (c(P)XCG motif) follow at residues 8-12, 26-30, 37-41, and 49-53; these read CISCN, CPNCG, CERCR, and CPKCG. Positions 26 and 29 each coordinate Zn(2+). C49 and C52 together coordinate Zn(2+).

Monomer in solution.

In terms of biological role, zinc-binding protein that binds only one zinc ion. This chain is Zinc finger protein MJ0458.1, found in Methanocaldococcus jannaschii (strain ATCC 43067 / DSM 2661 / JAL-1 / JCM 10045 / NBRC 100440) (Methanococcus jannaschii).